Consider the following 150-residue polypeptide: MALDQSFVGRSYPPTDPYEVGREKIREFAEAVGDPNPVYTDPEAAKALGYADVIAPPTFVFAITFKAAGQVVQDPQLGLDYSRVVHGDQKFAYTRPVRAGDRLTVTSTIESIKSLAGNDVVDVRGEVHDEAGEHVVTAITKLVARAAEEG.

Residues 8–126 form the MaoC-like domain; the sequence is VGRSYPPTDP…GNDVVDVRGE (119 aa).

This sequence belongs to the UPF0336 family.

In Streptomyces avermitilis (strain ATCC 31267 / DSM 46492 / JCM 5070 / NBRC 14893 / NCIMB 12804 / NRRL 8165 / MA-4680), this protein is UPF0336 protein SAV_4901.